A 130-amino-acid chain; its full sequence is Small ribosomal subunit protein uS8 (130 aa).

This sequence belongs to the universal ribosomal protein uS8 family. In terms of assembly, part of the 30S ribosomal subunit.

Functionally, one of the primary rRNA binding proteins, it binds directly to 16S rRNA central domain where it helps coordinate assembly of the platform of the 30S subunit. In Halorubrum lacusprofundi (strain ATCC 49239 / DSM 5036 / JCM 8891 / ACAM 34), this protein is Small ribosomal subunit protein uS8.